A 353-amino-acid polypeptide reads, in one-letter code: Terpene synthase 3 (353 aa).

Residues Asp118, Asn261, and Glu269 each coordinate Mg(2+). Residues 118–122 (DDLLE) carry the D(D/E)XX(D/E) motif motif. The NSE motif motif lies at 261 to 269 (NDTFLLKKE). Positions 342–349 (WCSKTTRY) match the WxxxxxRY motif motif.

The protein belongs to the terpene synthase family. Mg(2+) is required as a cofactor.

Its function is as follows. Terpene synthase that may be involved in the production of volatile terpenoids. Does not show detectable terpene products with either farnesyl diphosphate (FPP) or geranyl diphosphate (GPP). P.polycephalum has a unique biology and these volatile terpenoids could function in internal communication of P.polycephalum, to mark the territory that have been explored, or they may be involved in chemotaxis. This Physarum polycephalum (Slime mold) protein is Terpene synthase 3.